The sequence spans 428 residues: Enolase (428 aa).

A (2R)-2-phosphoglycerate-binding site is contributed by glutamine 164. The active-site Proton donor is the glutamate 208. Mg(2+)-binding residues include aspartate 245, glutamate 286, and aspartate 313. Lysine 338, arginine 367, serine 368, and lysine 389 together coordinate (2R)-2-phosphoglycerate. Residue lysine 338 is the Proton acceptor of the active site.

It belongs to the enolase family. Mg(2+) is required as a cofactor.

It localises to the cytoplasm. It is found in the secreted. The protein resides in the cell surface. The catalysed reaction is (2R)-2-phosphoglycerate = phosphoenolpyruvate + H2O. The protein operates within carbohydrate degradation; glycolysis; pyruvate from D-glyceraldehyde 3-phosphate: step 4/5. In terms of biological role, catalyzes the reversible conversion of 2-phosphoglycerate (2-PG) into phosphoenolpyruvate (PEP). It is essential for the degradation of carbohydrates via glycolysis. In Pyrococcus abyssi (strain GE5 / Orsay), this protein is Enolase.